Consider the following 73-residue polypeptide: ComX pheromone (73 aa).

Positions 1 to 52 (MKHIDKIISHLVNNPEAFDQFKNGNLTLLNINEKEKKAILYAFEQGEVPRTS) are excised as a propeptide. Residue Trp54 is the site of 3'-farnesyl-2',N2-cyclotryptophan attachment. A propeptide spanning residues 59-73 (AISNFFEDDKRKSLI) is cleaved from the precursor.

Interacts directly with the sensor histidine kinase ComP and stimulates its activity. In terms of processing, trp-54 is modified by farnesylation, which is essential for activity. Modified by the tryptophan prenyltransferase ComQ before export to the extracellular environment.

It is found in the secreted. Part of a major quorum-sensing system that regulates the development of genetic competence. Acts through the activation of the two-component regulatory system ComP/ComA composed of a sensor histidine kinase, ComP, and a response regulator, ComA. Activates the expression of the genes for biosynthesis of poly-gamma-glutamic acid (gamma-PGA), which is involved in biofilm formation in B.subtilis natto. The polypeptide is ComX pheromone (Bacillus subtilis subsp. natto (strain BEST195)).